Reading from the N-terminus, the 345-residue chain is Phosphoribosylformylglycinamidine cyclo-ligase (345 aa).

The protein belongs to the AIR synthase family.

Its subcellular location is the cytoplasm. It catalyses the reaction 2-formamido-N(1)-(5-O-phospho-beta-D-ribosyl)acetamidine + ATP = 5-amino-1-(5-phospho-beta-D-ribosyl)imidazole + ADP + phosphate + H(+). Its pathway is purine metabolism; IMP biosynthesis via de novo pathway; 5-amino-1-(5-phospho-D-ribosyl)imidazole from N(2)-formyl-N(1)-(5-phospho-D-ribosyl)glycinamide: step 2/2. This is Phosphoribosylformylglycinamidine cyclo-ligase from Shewanella frigidimarina (strain NCIMB 400).